Reading from the N-terminus, the 917-residue chain is MLX-interacting protein (917 aa).

The segment at 1 to 72 (MAADVFMCSP…AGPGREEPPR (72 aa)) is disordered. Alanine 2 carries the N-acetylalanine modification. Serine 9, serine 33, and serine 39 each carry phosphoserine. Positions 27 to 37 (PEDDDDSDTDE) are enriched in acidic residues. Residues 47–57 (ATSARAHASAA) are compositionally biased toward low complexity. The required for cytoplasmic localization stretch occupies residues 73 to 327 (RQQIIHSGHF…PLQPNLDFMD (255 aa)). The interval 322–445 (NLDFMDTFEP…LLSPGPAPAP (124 aa)) is transactivation domain. Disordered stretches follow at residues 347–402 (LPPP…CERT) and 632–711 (SHST…TDPK). Positions 378 to 388 (LPNSLITSSAA) are enriched in polar residues. The span at 632 to 643 (SHSTSSQPSPVS) shows a compositional bias: low complexity. Phosphoserine is present on serine 667. Polar residues predominate over residues 670 to 685 (VPATGSSRDCPNSGQA). The segment covering 686-704 (SPCPSEQSPSPQSPQNNCS) has biased composition (low complexity). One can recognise a bHLH domain in the interval 717 to 767 (KNRQKHISAEQKRRFNIRMGFNTLNSLISNNSKQTSHAITLQKTMEYITKL). The segment at 767–788 (LQQERMQMQEEARRLREEIEEL) is leucine-zipper. The mediates heterotypic interactions between MLXIP and MLX and is required for cytoplasmic localization stretch occupies residues 830–879 (WKFWIFSMIIKPLFESFKGMVSTSSLEEFHRTALSWLDQHCSLPVLRPMV). The interval 897–917 (SQLPEQASEAVTRMGKRSGES) is disordered.

Efficient DNA binding requires dimerization with another bHLH protein. Binds DNA as a homodimer or a heterodimer with MLX/TCFL4.

The protein resides in the cytoplasm. It localises to the nucleus. The protein localises to the mitochondrion outer membrane. Functionally, binds DNA as a heterodimer with MLX/TCFL4 and activates transcription. Binds to the canonical E box sequence 5'-CACGTG-3'. Plays a role in transcriptional activation of glycolytic target genes. Involved in glucose-responsive gene regulation. Regulates transcription in response to changes in cellular carbohydrate abundance such as occurs during fasting to feeding metabolic transition. Refeeding stimulates MLXIPL/ChREBP transcription factor, leading to increased BCKDK to PPM1K expression ratio, phosphorylation and activation of ACLY that ultimately results in the generation of malonyl-CoA and oxaloacetate immediate substrates of de novo lipogenesis and gluconeogenesis, respectively. The protein is MLX-interacting protein of Mus musculus (Mouse).